A 441-amino-acid polypeptide reads, in one-letter code: Protein arginine methyltransferase NDUFAF7, mitochondrial (441 aa).

A mitochondrion-targeting transit peptide spans 1–46 (MSVLLRSGLGPLCAVARAAIPFIWRGKYFSSGNEPAENPVTPMLRH).

It belongs to the NDUFAF7 family. Interacts with NDUFS2.

It is found in the mitochondrion. The enzyme catalyses L-arginyl-[protein] + 2 S-adenosyl-L-methionine = N(omega),N(omega)'-dimethyl-L-arginyl-[protein] + 2 S-adenosyl-L-homocysteine + 2 H(+). Arginine methyltransferase involved in the assembly or stability of mitochondrial NADH:ubiquinone oxidoreductase complex (complex I). Acts by mediating symmetric dimethylation of 'Arg-118' of NDUFS2 after it assembles into the complex I, stabilizing the early intermediate complex. This chain is Protein arginine methyltransferase NDUFAF7, mitochondrial, found in Homo sapiens (Human).